The primary structure comprises 358 residues: MGGAVSAGEDNDDLIDNLKEAQYIRTESVEQAFRAIDRGDYYLEGYRDNAYKDLAWKHGNIHLSAPCIYSEVMEALKLQPGLSFLNLGSGTGYLSTMVGLILGPFGINHGIELHSDVVEYAKEKLESFIKYSDSFDKFEFCEPAFVVGNCLEIASDSHQYDRIYCGAGVQKDHENYMKILLKVGGILVMPIEDQLTQILRTGQNTWESKNILAVSFAPLVQPNRNDNGKHDTVGLPPCAVRNLQDLARIYIRRTLRNFINEEMKAKGIAQKAPPKRKRRRCRRRRINTYVFVGNQLIPQPLDSEEDERMEDDNKEEEDKDHSEALKPEEPPRNLLREKIMSLPLPESLKAYLTYYREK.

G2 carries N-myristoyl glycine lipidation. The active site involves S64. AdoMet binding motif regions lie at residues L85–L94, Y160–Y164, and L181–I191. Residues V240–Y250 are BC-box. Residues P300–I339 are disordered. The span at D302–D318 shows a compositional bias: acidic residues. Residues K319 to I339 show a composition bias toward basic and acidic residues. Residues L342–P345 form a CUL-box region.

It belongs to the methyltransferase superfamily. L-isoaspartyl/D-aspartyl protein methyltransferase family. As to quaternary structure, component of the probable ECS(PCMTD1) E3 ubiquitin-protein ligase complex, at least composed of CUL5, ELOB, ELOC, RBX2 and PCMTD1.

Its subcellular location is the cytoplasm. It localises to the membrane. In terms of biological role, substrate recognition component of an ECS (Elongin BC-CUL5-SOCS-box protein) E3 ubiquitin ligase complex which mediates the ubiquitination and subsequent proteasomal degradation of target proteins. Specifically binds to the methyltransferase cofactor S-adenosylmethionine (AdoMet) via the N-terminal AdoMet binding motif, but does not display methyltransferase activity. May provide an alternate maintenance pathway for modified proteins by acting as a damage-specific E3 ubiquitin ligase adaptor protein. The chain is Protein-L-isoaspartate O-methyltransferase domain-containing protein 1 (PCMTD1) from Gallus gallus (Chicken).